The sequence spans 188 residues: MGLKADSWIKKMSLEHGMISPFCEKQVGKNVISYGLSSYGYDIRVGSEFMLFDNKNALIDPKNFDPNNATKIDASKEGYFILPANAFALAHTIEYFKMPKDTLAICLGKSTYARCGIIVNVTPFEPEFEGYITIEISNTTNLPAKVYANEGIAQVVFLQGDEMCEQSYKDRGGKYQGQVGITLPKILK.

109–114 (KSTYAR) is a dCTP binding site. Catalysis depends on E135, which acts as the Proton donor/acceptor. Residues Q154, Y168, and Q178 each coordinate dCTP.

Belongs to the dCTP deaminase family. As to quaternary structure, homotrimer.

The catalysed reaction is dCTP + H2O + H(+) = dUTP + NH4(+). It functions in the pathway pyrimidine metabolism; dUMP biosynthesis; dUMP from dCTP (dUTP route): step 1/2. Catalyzes the deamination of dCTP to dUTP. The protein is dCTP deaminase of Helicobacter pylori (strain P12).